The primary structure comprises 707 residues: Lipase maturation factor 2 (707 aa).

Helical transmembrane passes span 11–31, 78–98, 102–122, 126–146, 220–240, 256–276, 306–326, 358–378, and 398–418; these read FLWG…AQIP, MEMI…FSFL, LVFL…QVFL, WDSL…VHAL, FSVV…FLPF, ILII…VLCC, LYSL…FWTV, ITFP…LKGM, and VIFS…YTYI. An N-linked (GlcNAc...) asparagine glycan is attached at Asn483. A helical transmembrane segment spans residues 634–654; that stretch reads LLLHSFIFGIFTIYFLQAMFG. The disordered stretch occupies residues 659-707; the sequence is PGVAKQRHSKPPNEKKKQKSNSGQGESAAAKSSGHGADTVRRNKKNEKS. A compositionally biased stretch (basic and acidic residues) spans 696-707; that stretch reads DTVRRNKKNEKS.

This sequence belongs to the lipase maturation factor family.

Its subcellular location is the endoplasmic reticulum membrane. Its function is as follows. Involved in the maturation of specific proteins in the endoplasmic reticulum. This Xenopus tropicalis (Western clawed frog) protein is Lipase maturation factor 2 (lmf2).